The following is a 1096-amino-acid chain: Protein spire (1096 aa).

Disordered regions lie at residues Met-1 to Thr-79 and Val-184 to Val-211. The segment covering Leu-37 to Ala-51 has biased composition (polar residues). Residues Thr-53–Gly-65 show a composition bias toward basic residues. Low complexity-rich tracts occupy residues Ala-66–Asn-77 and Gln-189–Pro-201. The 256-residue stretch at Val-111–Leu-366 folds into the KIND domain. The stretch at Lys-315–Asn-340 forms a coiled coil. WH2 domains lie at Pro-436–Val-454 and Pro-500–Ile-517. 3 disordered regions span residues Asp-560–Ala-588, Gln-614–Thr-656, and Gln-693–Trp-762. Positions His-574–Ala-585 are enriched in basic residues. 2 stretches are compositionally biased toward low complexity: residues Ala-633–Ala-645 and Asp-714–Ser-725. A compositionally biased stretch (basic and acidic residues) spans Glu-737 to His-754. Positions Leu-780–Glu-800 are spir-box. The span at Pro-874–Thr-894 shows a compositional bias: low complexity. 3 disordered regions span residues Pro-874–Asp-899, Arg-912–His-958, and Arg-997–Leu-1021. A compositionally biased stretch (polar residues) spans Ser-921–Gly-941.

Belongs to the spire family. Interacts with bsk, Rho1, Rac1, Cdc42 and wash. Interacts with capu. In terms of processing, phosphorylated by Jnk kinase (bsk).

The protein localises to the cytoplasm. The protein resides in the cytoskeleton. Its subcellular location is the perinuclear region. It localises to the cell membrane. It is found in the cytoplasmic vesicle membrane. Functionally, acts as an actin nucleation factor, remains associated with the slow-growing pointed end of the new filament. Promotes dissociation of capu from the barbed end of actin filaments. Involved in intracellular vesicle transport along actin fibers, providing a novel link between actin cytoskeleton dynamics and intracellular transport. Required for localization of determinants within the developing oocyte to the posterior pole and to the dorsal anterior corner. Links Rho family signaling and Jnk function to the actin cytoskeleton. This Drosophila pseudoobscura pseudoobscura (Fruit fly) protein is Protein spire.